The primary structure comprises 414 residues: Glucose-1-phosphate adenylyltransferase (414 aa).

Alpha-D-glucose 1-phosphate-binding positions include Tyr-103, Gly-168, 183 to 184 (EK), and Ser-201.

Belongs to the bacterial/plant glucose-1-phosphate adenylyltransferase family. As to quaternary structure, homotetramer.

It catalyses the reaction alpha-D-glucose 1-phosphate + ATP + H(+) = ADP-alpha-D-glucose + diphosphate. Its pathway is glycan biosynthesis; glycogen biosynthesis. In terms of biological role, involved in the biosynthesis of ADP-glucose, a building block required for the elongation reactions to produce glycogen. Catalyzes the reaction between ATP and alpha-D-glucose 1-phosphate (G1P) to produce pyrophosphate and ADP-Glc. The chain is Glucose-1-phosphate adenylyltransferase from Thermus caldophilus.